The primary structure comprises 275 residues: Esterase AAEL000016 (275 aa).

A disordered region spans residues 1–21 (MMANETAAKSTKSSPTPAVEP). The span at 7 to 16 (AAKSTKSSPT) shows a compositional bias: polar residues. Catalysis depends on charge relay system residues Ser-129, Asp-187, and His-214. Residues 253-275 (LVDDSGPAGNGVHDDDDDDDDSD) are disordered. A compositionally biased stretch (acidic residues) spans 266 to 275 (DDDDDDDDSD).

It belongs to the LovG family.

The protein is Esterase AAEL000016 of Aedes aegypti (Yellowfever mosquito).